A 416-amino-acid polypeptide reads, in one-letter code: Gamma-glutamyl phosphate reductase (416 aa).

Belongs to the gamma-glutamyl phosphate reductase family.

The protein localises to the cytoplasm. The enzyme catalyses L-glutamate 5-semialdehyde + phosphate + NADP(+) = L-glutamyl 5-phosphate + NADPH + H(+). Its pathway is amino-acid biosynthesis; L-proline biosynthesis; L-glutamate 5-semialdehyde from L-glutamate: step 2/2. Its function is as follows. Catalyzes the NADPH-dependent reduction of L-glutamate 5-phosphate into L-glutamate 5-semialdehyde and phosphate. The product spontaneously undergoes cyclization to form 1-pyrroline-5-carboxylate. This Streptococcus pyogenes serotype M4 (strain MGAS10750) protein is Gamma-glutamyl phosphate reductase.